The primary structure comprises 647 residues: DEAD-box ATP-dependent RNA helicase 18 (647 aa).

Residues 23–51 (FSELSPALSPEVVKALKGGGFRRCTPVQA) carry the Q motif motif. In terms of domain architecture, Helicase ATP-binding spans 54-232 (IPLLLSHKDV…KAGLRNPVRV (179 aa)). 67–74 (AATGSGKT) lines the ATP pocket. Residues 180–183 (DEAD) carry the DEAD box motif. Residues 274–430 (QLVDFLVQNN…DIVPQIRSAA (157 aa)) form the Helicase C-terminal domain. Positions 507–582 (KYKDKAREKQ…RLLKKLKRGV (76 aa)) form a coiled coil. Basic and acidic residues predominate over residues 512 to 545 (AREKQRQKTLKRKAEELALRPEIEKRRKAPEKPE). Disordered regions lie at residues 512 to 565 (AREK…KEDM) and 590 to 647 (KLTG…TRRR). The span at 596–610 (ESDDDDSSDGGDSDL) shows a compositional bias: acidic residues. Residues 619-633 (KVLKKIKQKGKAKGS) show a composition bias toward basic residues.

The protein belongs to the DEAD box helicase family. DDX55/SPB4 subfamily. Interacts with BRI1. Post-translationally, phosphorylated.

The enzyme catalyses ATP + H2O = ADP + phosphate + H(+). The sequence is that of DEAD-box ATP-dependent RNA helicase 18 from Oryza sativa subsp. japonica (Rice).